We begin with the raw amino-acid sequence, 408 residues long: MDASNNTTSWNILQRGRMGPSWRRCPVSYQIIASLFLGRSFSAGIFGNACVIAAIALERSLQNVANYLIGSLAVTDLMVSVLVLPMAAQNQVLNKWTLGQVTCDIFISLDVLCCTSSILHLCAIALDRYWAITDPIDYVNKRTPRRAAVLISITWIVGFSISIPPMLGWRTPEDRSDPNACRISEDPGYTIYSTFGAFYIPLILMLVLYGKIFKAARFRIRKTVKKAEKKKVADTCLSVSQQSPKEKQRGAQQELEEVGGAQAQRCVNGAIRHGEEGAVLEIIEVHHYVNSKCHLHCKPVPPPEQLPPALKNDRATEAKRKVALARERKTVKTLGIIMGTFILCWLPFFIVALVLPFCETCHMPHLLFDIITWLGYSNSLLNPIIYAYFNKDFQSAFKKIIKCKFCRQ.

The Extracellular portion of the chain corresponds to 1 to 32; it reads MDASNNTTSWNILQRGRMGPSWRRCPVSYQII. N-linked (GlcNAc...) asparagine glycans are attached at residues asparagine 5 and asparagine 6. The chain crosses the membrane as a helical span at residues 33-53; sequence ASLFLGRSFSAGIFGNACVIA. Residues 54-67 are Cytoplasmic-facing; sequence AIALERSLQNVANY. The chain crosses the membrane as a helical span at residues 68–92; sequence LIGSLAVTDLMVSVLVLPMAAQNQV. Topologically, residues 93-101 are extracellular; that stretch reads LNKWTLGQV. Residues 102-126 traverse the membrane as a helical segment; that stretch reads TCDIFISLDVLCCTSSILHLCAIAL. A disulfide bridge links cysteine 103 with cysteine 181. Aspartate 110 and cysteine 114 together coordinate serotonin. Residues 127 to 129 carry the DRY motif; important for ligand-induced conformation changes motif; the sequence is DRY. Residues 127 to 146 are Cytoplasmic-facing; sequence DRYWAITDPIDYVNKRTPRR. Residues 147-168 form a helical membrane-spanning segment; sequence AAVLISITWIVGFSISIPPMLG. The Extracellular segment spans residues 169–187; it reads WRTPEDRSDPNACRISEDP. A helical transmembrane segment spans residues 188-210; sequence GYTIYSTFGAFYIPLILMLVLYG. Topologically, residues 211 to 333 are cytoplasmic; that stretch reads KIFKAARFRI…LARERKTVKT (123 aa). Residues 235 to 255 are disordered; the sequence is TCLSVSQQSPKEKQRGAQQEL. Positions 332, 333, and 339 each coordinate 1D-myo-inositol 4-phosphate. The chain crosses the membrane as a helical span at residues 334 to 357; sequence LGIIMGTFILCWLPFFIVALVLPF. Residues 358–364 lie on the Extracellular side of the membrane; it reads CETCHMP. A helical transmembrane segment spans residues 365–389; sequence HLLFDIITWLGYSNSLLNPIIYAYF. Residues 382-386 carry the NPxxY motif; important for ligand-induced conformation changes and signaling motif; sequence NPIIY. The 1D-myo-inositol 4-phosphate site is built by phenylalanine 389, asparagine 390, and lysine 391. The Cytoplasmic portion of the chain corresponds to 390–408; the sequence is NKDFQSAFKKIIKCKFCRQ.

Belongs to the G-protein coupled receptor 1 family. 5-hydroxytryptamine receptor subfamily. HTR1A sub-subfamily. First expressed in the rostral part of the brain stem at stage 22. At later stages of development, expression is localized to serotonergic neurons. The expression pattern changes in the tadpole of stage 41 where, in addition to serotonergic neurons, expression is also localized to the inner nuclear layer (INL) of the developing retina. This expression pattern continues through to the start of metamorphosis (stage 46). In adults, expressed in the brain, in particular the telencephalon, diencephalon and mesencephalon. In the telencephalic region, expression is localized to the lateral, dorsal and medial pallium, and in the striatum, septum and amygdala. In the mesencephalic region, expression is strongest in the optic tectum and torus semicircularis with moderate levels of expression in tegmental nuclei. In diencephalon, localized to the dorsal and ventral thalamus and the preoptic area of the hypothalamus.

It is found in the cell membrane. G-protein coupled receptor activity is regulated by lipids: phosphatidylinositol 4-phosphate increases HTR1A-mediated activity. Functionally, G-protein coupled receptor for 5-hydroxytryptamine (serotonin). Also functions as a receptor for various drugs and psychoactive substances. Ligand binding causes a conformation change that triggers signaling via guanine nucleotide-binding proteins (G proteins) and modulates the activity of downstream effectors, such as adenylate cyclase. HTR1A is coupled to G(i)/G(o) G alpha proteins and mediates inhibitory neurotransmission: signaling inhibits adenylate cyclase activity and activates a phosphatidylinositol-calcium second messenger system that regulates the release of Ca(2+) ions from intracellular stores. Beta-arrestin family members regulate signaling by mediating both receptor desensitization and resensitization processes. Activation of the receptor may play a role in the exit from G0 phase and in promoting DNA synthesis. In Xenopus laevis (African clawed frog), this protein is 5-hydroxytryptamine receptor 1A.